The primary structure comprises 480 residues: UDP-glucose 6-dehydrogenase 5 (480 aa).

Residues 8–13 (GAGYVG), Asp33, Arg38, 86–90 (VNTPT), 127–128 (ST), and Glu161 each bind NAD(+). Substrate contacts are provided by residues 157–161 (EFLAE), 216–223 (KLAANAFL), and 256–269 (RIGPKFLNASVGFG). Catalysis depends on Cys272, which acts as the Nucleophile. Position 272-275 (272-275 (CFQK)) interacts with NAD(+). Residue 334 to 335 (FK) participates in substrate binding. Arg342 contributes to the NAD(+) binding site. Ser393 is subject to Phosphoserine. Arg447 provides a ligand contact to substrate.

This sequence belongs to the UDP-glucose/GDP-mannose dehydrogenase family.

It catalyses the reaction UDP-alpha-D-glucose + 2 NAD(+) + H2O = UDP-alpha-D-glucuronate + 2 NADH + 3 H(+). Its pathway is nucleotide-sugar biosynthesis; UDP-alpha-D-glucuronate biosynthesis; UDP-alpha-D-glucuronate from UDP-alpha-D-glucose: step 1/1. Involved in the biosynthesis of UDP-glucuronic acid (UDP-GlcA), providing nucleotide sugars for cell-wall polymers. The chain is UDP-glucose 6-dehydrogenase 5 (UGD5) from Oryza sativa subsp. japonica (Rice).